We begin with the raw amino-acid sequence, 1714 residues long: Protein ESSENTIAL FOR POTEXVIRUS ACCUMULATION 1 (1714 aa).

Disordered stretches follow at residues 1 to 296 (MANS…PPHL) and 358 to 511 (IVSS…SKGE). Residue Ser39 is modified to Phosphoserine. A compositionally biased stretch (polar residues) spans 58–75 (DPNQYGNHSDVVRTTGNG). 2 stretches are compositionally biased toward basic and acidic residues: residues 96 to 136 (ESGR…DRWD) and 143 to 203 (GEQR…REKG). Composition is skewed to polar residues over residues 230-244 (HNQSTPNKQVTSFSH) and 268-278 (IFTSAPNQSHP). Basic and acidic residues-rich tracts occupy residues 389–422 (GSREDMTFGAEESKDESGETRNYPDDKFRPEASH) and 430–441 (RGNEAPVRELKE). The segment covering 444 to 463 (MQGNAHVQSASPWRQSSGGE) has biased composition (polar residues). Basic and acidic residues predominate over residues 464-483 (RSNRNSHDWNDPSADSRLKS). The 52-residue stretch at 546 to 597 (ELSLYYKDPQGLIQGPFSGSDIIGWFEAGYFGIDLLVRLASAPNDSPFSLLG) folds into the GYF domain. 3 disordered regions span residues 728 to 753 (ESANLMPGSENVSENAQQPTRSPSSD), 1092 to 1205 (VKNN…KPAP), and 1437 to 1566 (QEKM…GKKE). Over residues 737-753 (ENVSENAQQPTRSPSSD) the composition is skewed to polar residues. Basic and acidic residues predominate over residues 1142–1162 (SEIKGKTKKSADTLIDNDTHL). The span at 1163–1180 (IKSSTATASNTSQMSSEV) shows a compositional bias: polar residues. The span at 1467 to 1488 (ASWSRSASSPSQAVSQSSSQSK) shows a compositional bias: low complexity. Residues 1515–1544 (LTSQNSWGTKNTPGKVNAGTSLNRQKSVSM) are compositionally biased toward polar residues.

Associates with eIF4E initiation factors and the ribosome complex, thus likely contributing to the proper translation of target proteins. Interacts directly with RPL18B and eIF4E1. Binds to SMG7. Quickly phosphorylated at Ser-39 after treatment of seedlings with the pathogen-associated molecular pattern (PAMP) flg22. Expressed in all tissues, mostly in flowers, leaves and stems, and, to a lower extent, in roots (at protein level).

Its subcellular location is the cytoplasm. The protein resides in the cytosol. It localises to the P-body. Translational repressor involved in the negative regulation of immune receptor accumulation via the inhibition of nucleotide-binding leucine-rich repeat (NLR) receptor mediated defense. Represses NLR protein accumulation (e.g. SNC1, RPS4, RPM1 and RPS2). Together with SMG7, helps to restrict effector-triggered immunity (ETI) cell death induction during pathogen infection in a salicylic acid- (SA) and reactive oxygen species- (ROS) independent manner. Required for pathogen-associated molecular pattern (PAMP)-induced suppression of necrotrophic fungal (e.g. F.moniliforme) pathogen-derived mycotoxin-triggered (e.g. fumonisin B1) cell death. Functionally, (Microbial infection) Required for early steps of plantago asiatica mosaic virus (PlAMV, genus Potexvirus) infection. Facilitates pathogenic growth of avirulent hemi-biotrophic bacteria P.syringae pv. tomato (Pst) DC3000 (e.g. AvrRps4 and AvrRpm1) and of the compatible oomycete H.arabidopsidis Noco2. The protein is Protein ESSENTIAL FOR POTEXVIRUS ACCUMULATION 1 of Arabidopsis thaliana (Mouse-ear cress).